The primary structure comprises 164 residues: MTIAIYAGSFDPVTNGHIDVLKGALRLADQVIVAIGMHPGKKPLFSFDERVALIEASAKAVLHKDAARVSVIAFDGLVIDAARKHGAQLMVRGLRDGTDLDYEMQMAGMNGTMAPELQTVFLPADPAVRTITATLVRQIASMGGDIKPFVPVAVAAALNTKFKS.

Substrate is bound at residue Ser9. ATP is bound by residues 9–10 (SF) and His17. Residues Lys41, Val78, and Arg92 each contribute to the substrate site. ATP contacts are provided by residues 93–95 (GLR), Glu103, and 128–134 (VRTITAT).

It belongs to the bacterial CoaD family. As to quaternary structure, homohexamer. Mg(2+) serves as cofactor.

It localises to the cytoplasm. The catalysed reaction is (R)-4'-phosphopantetheine + ATP + H(+) = 3'-dephospho-CoA + diphosphate. It functions in the pathway cofactor biosynthesis; coenzyme A biosynthesis; CoA from (R)-pantothenate: step 4/5. Its function is as follows. Reversibly transfers an adenylyl group from ATP to 4'-phosphopantetheine, yielding dephospho-CoA (dPCoA) and pyrophosphate. The polypeptide is Phosphopantetheine adenylyltransferase (Brucella abortus (strain 2308)).